We begin with the raw amino-acid sequence, 79 residues long: uncharacterized protein (79 aa).

This is an uncharacterized protein from Homo sapiens (Human).